We begin with the raw amino-acid sequence, 322 residues long: 4-diphosphocytidyl-2-C-methyl-D-erythritol kinase (322 aa).

The active site involves Lys-27. 112-122 (PVAGGMAGGSA) contacts ATP. The active site involves Asp-154.

Belongs to the GHMP kinase family. IspE subfamily.

The enzyme catalyses 4-CDP-2-C-methyl-D-erythritol + ATP = 4-CDP-2-C-methyl-D-erythritol 2-phosphate + ADP + H(+). The protein operates within isoprenoid biosynthesis; isopentenyl diphosphate biosynthesis via DXP pathway; isopentenyl diphosphate from 1-deoxy-D-xylulose 5-phosphate: step 3/6. Its function is as follows. Catalyzes the phosphorylation of the position 2 hydroxy group of 4-diphosphocytidyl-2C-methyl-D-erythritol. This chain is 4-diphosphocytidyl-2-C-methyl-D-erythritol kinase, found in Mycolicibacterium smegmatis (strain ATCC 700084 / mc(2)155) (Mycobacterium smegmatis).